Here is a 126-residue protein sequence, read N- to C-terminus: 5-hydroxyisourate hydrolase (126 aa).

3 residues coordinate substrate: histidine 16, arginine 54, and tyrosine 123.

Belongs to the transthyretin family. 5-hydroxyisourate hydrolase subfamily. Homotetramer.

It catalyses the reaction 5-hydroxyisourate + H2O = 5-hydroxy-2-oxo-4-ureido-2,5-dihydro-1H-imidazole-5-carboxylate + H(+). In terms of biological role, catalyzes the hydrolysis of 5-hydroxyisourate (HIU) to 2-oxo-4-hydroxy-4-carboxy-5-ureidoimidazoline (OHCU). The sequence is that of 5-hydroxyisourate hydrolase from Pseudomonas aeruginosa (strain ATCC 15692 / DSM 22644 / CIP 104116 / JCM 14847 / LMG 12228 / 1C / PRS 101 / PAO1).